Here is a 293-residue protein sequence, read N- to C-terminus: Energy-coupling factor transporter ATP-binding protein EcfA2 (293 aa).

The ABC transporter domain occupies Ile-3 to Asp-246. Residue Gly-40 to Ser-47 coordinates ATP.

Belongs to the ABC transporter superfamily. Energy-coupling factor EcfA family. Forms a stable energy-coupling factor (ECF) transporter complex composed of 2 membrane-embedded substrate-binding proteins (S component), 2 ATP-binding proteins (A component) and 2 transmembrane proteins (T component).

It is found in the cell membrane. ATP-binding (A) component of a common energy-coupling factor (ECF) ABC-transporter complex. Unlike classic ABC transporters this ECF transporter provides the energy necessary to transport a number of different substrates. The chain is Energy-coupling factor transporter ATP-binding protein EcfA2 from Bacillus cereus (strain ZK / E33L).